Consider the following 162-residue polypeptide: RNA pyrophosphohydrolase (162 aa).

Residues 7–149 enclose the Nudix hydrolase domain; the sequence is KYRPCVGIML…KKEVYKTVIE (143 aa). A Nudix box motif is present at residues 40-61; the sequence is GGVDDGEELEQAALRELLEEVG.

It belongs to the Nudix hydrolase family. RppH subfamily. Requires a divalent metal cation as cofactor.

Accelerates the degradation of transcripts by removing pyrophosphate from the 5'-end of triphosphorylated RNA, leading to a more labile monophosphorylated state that can stimulate subsequent ribonuclease cleavage. The protein is RNA pyrophosphohydrolase of Wolbachia pipientis wMel.